We begin with the raw amino-acid sequence, 504 residues long: Probable GTP-binding protein OBGC2 (504 aa).

The span at 24-39 (AHRDARPALRLPELHA) shows a compositional bias: basic and acidic residues. Disordered regions lie at residues 24 to 46 (AHRDARPALRLPELHATRRRRNN) and 93 to 122 (VLAMPASPSTDAPKSPRRRSDKGKRSGVKK). Residues 73–276 (HKYFDHAVVT…VSLELILRVV (204 aa)) form the Obg domain. A compositionally biased stretch (basic residues) spans 107–122 (SPRRRSDKGKRSGVKK). One can recognise an OBG-type G domain in the interval 277–494 (ADVGLVGLPN…MLKEIRAALR (218 aa)). GTP-binding positions include 283–290 (GLPNAGKS) and 337–341 (DLPGL). The segment covering 436 to 452 (SEDSLNGNTGEHNTSSE) has biased composition (polar residues). A disordered region spans residues 436–463 (SEDSLNGNTGEHNTSSETKVEGGEKELR). Positions 453-463 (TKVEGGEKELR) are enriched in basic and acidic residues.

This sequence belongs to the TRAFAC class OBG-HflX-like GTPase superfamily. OBG GTPase family.

May bind GTP and have GTPase activity. This Oryza sativa subsp. japonica (Rice) protein is Probable GTP-binding protein OBGC2.